A 90-amino-acid chain; its full sequence is Small ribosomal subunit protein bS20 (90 aa).

This sequence belongs to the bacterial ribosomal protein bS20 family.

Functionally, binds directly to 16S ribosomal RNA. The chain is Small ribosomal subunit protein bS20 from Nautilia profundicola (strain ATCC BAA-1463 / DSM 18972 / AmH).